Here is a 225-residue protein sequence, read N- to C-terminus: Enolase-phosphatase E1 (225 aa).

It belongs to the HAD-like hydrolase superfamily. MasA/MtnC family. As to quaternary structure, monomer. The cofactor is Mg(2+).

The catalysed reaction is 5-methylsulfanyl-2,3-dioxopentyl phosphate + H2O = 1,2-dihydroxy-5-(methylsulfanyl)pent-1-en-3-one + phosphate. Its pathway is amino-acid biosynthesis; L-methionine biosynthesis via salvage pathway; L-methionine from S-methyl-5-thio-alpha-D-ribose 1-phosphate: step 3/6. It functions in the pathway amino-acid biosynthesis; L-methionine biosynthesis via salvage pathway; L-methionine from S-methyl-5-thio-alpha-D-ribose 1-phosphate: step 4/6. Functionally, bifunctional enzyme that catalyzes the enolization of 2,3-diketo-5-methylthiopentyl-1-phosphate (DK-MTP-1-P) into the intermediate 2-hydroxy-3-keto-5-methylthiopentenyl-1-phosphate (HK-MTPenyl-1-P), which is then dephosphorylated to form the acireductone 1,2-dihydroxy-3-keto-5-methylthiopentene (DHK-MTPene). The polypeptide is Enolase-phosphatase E1 (Shewanella denitrificans (strain OS217 / ATCC BAA-1090 / DSM 15013)).